Reading from the N-terminus, the 270-residue chain is NAD kinase (270 aa).

Catalysis depends on D49, which acts as the Proton acceptor. Residues 49-50, R54, 126-127, R152, D154, 165-170, A189, and Q227 contribute to the NAD(+) site; these read DG, NE, and TAYNKS.

This sequence belongs to the NAD kinase family. A divalent metal cation is required as a cofactor.

Its subcellular location is the cytoplasm. The enzyme catalyses NAD(+) + ATP = ADP + NADP(+) + H(+). In terms of biological role, involved in the regulation of the intracellular balance of NAD and NADP, and is a key enzyme in the biosynthesis of NADP. Catalyzes specifically the phosphorylation on 2'-hydroxyl of the adenosine moiety of NAD to yield NADP. This is NAD kinase from Lactococcus lactis subsp. cremoris (strain SK11).